The primary structure comprises 180 residues: Dynactin subunit 6 (180 aa).

The protein belongs to the dynactin subunits 5/6 family. Dynactin subunit 6 subfamily. As to quaternary structure, subunit of dynactin, a multiprotein complex part of a tripartite complex with dynein and a adapter, such as BICDL1, BICD2 or HOOK3. The dynactin complex is built around ACTR1A/ACTB filament and consists of an actin-related filament composed of a shoulder domain, a pointed end and a barbed end.

It is found in the cytoplasm. The protein resides in the cytoskeleton. In terms of biological role, part of the dynactin complex that activates the molecular motor dynein for ultra-processive transport along microtubules. This chain is Dynactin subunit 6 (dnc-6), found in Caenorhabditis elegans.